We begin with the raw amino-acid sequence, 42 residues long: Crotamine Ile-19 (42 aa).

3 cysteine pairs are disulfide-bonded: Cys-4–Cys-36, Cys-11–Cys-30, and Cys-18–Cys-37.

This sequence belongs to the crotamine-myotoxin family. As to quaternary structure, monomer. Expressed by the venom gland.

The protein resides in the secreted. Cationic peptide that possesses multiple functions. It acts as a cell-penetrating peptide (CPP), and as a potent voltage-gated potassium channel (Kv) inhibitor, it induces severe muscle necrosis by a non-enzymatic mechanism and exhibits antimicrobial activities. It also elicits a short-lasting hyperextension of the hind limb. It does not cause observable tissue damage (whereas the whole venom causes severe myonecrosis accompanied by edema and hemorrhage). The sequence is that of Crotamine Ile-19 from Crotalus durissus ruruima (South American rattlesnake).